A 212-amino-acid chain; its full sequence is MISYLKGSPIEVIKNTNNRVILVLEVNEIGYELQIPSKLGREISQEKLDTIQIFTHVQIKEDQQILYGFSTTAERELFRQLISVSGIGAQSAIALIDTLGLEELVQAIVTGNIRILSQPSGIGRKTAERIALELRTKLSQWRKMVGVTVTSSAAMPSLEILEDIEMTLLALGYTNEEINKAISTLSQDNLMLKNTNTEEWIKEAIAWLSQGT.

Positions 1-70 are domain I; sequence MISYLKGSPI…EDQQILYGFS (70 aa). Residues 71–149 form a domain II region; the sequence is TTAERELFRQ…QWRKMVGVTV (79 aa). The flexible linker stretch occupies residues 150–160; the sequence is TSSAAMPSLEI. The interval 160 to 212 is domain III; it reads ILEDIEMTLLALGYTNEEINKAISTLSQDNLMLKNTNTEEWIKEAIAWLSQGT.

Belongs to the RuvA family. In terms of assembly, homotetramer. Forms an RuvA(8)-RuvB(12)-Holliday junction (HJ) complex. HJ DNA is sandwiched between 2 RuvA tetramers; dsDNA enters through RuvA and exits via RuvB. An RuvB hexamer assembles on each DNA strand where it exits the tetramer. Each RuvB hexamer is contacted by two RuvA subunits (via domain III) on 2 adjacent RuvB subunits; this complex drives branch migration. In the full resolvosome a probable DNA-RuvA(4)-RuvB(12)-RuvC(2) complex forms which resolves the HJ.

It localises to the cytoplasm. Its function is as follows. The RuvA-RuvB-RuvC complex processes Holliday junction (HJ) DNA during genetic recombination and DNA repair, while the RuvA-RuvB complex plays an important role in the rescue of blocked DNA replication forks via replication fork reversal (RFR). RuvA specifically binds to HJ cruciform DNA, conferring on it an open structure. The RuvB hexamer acts as an ATP-dependent pump, pulling dsDNA into and through the RuvAB complex. HJ branch migration allows RuvC to scan DNA until it finds its consensus sequence, where it cleaves and resolves the cruciform DNA. The sequence is that of Holliday junction branch migration complex subunit RuvA from Crocosphaera subtropica (strain ATCC 51142 / BH68) (Cyanothece sp. (strain ATCC 51142)).